Consider the following 412-residue polypeptide: Motilin receptor (412 aa).

Over 1-35 (MGSPWNGSDGPEGAREPPWPALPPCDERRCSPFPL) the chain is Extracellular. Residue Asn-6 is glycosylated (N-linked (GlcNAc...) asparagine). Residues 36–56 (GALVPVTAVCLCLFVVGVSGN) form a helical membrane-spanning segment. Residues 57 to 74 (VVTVMLIGRYRDMRTTTN) lie on the Cytoplasmic side of the membrane. A helical transmembrane segment spans residues 75 to 94 (LYLGSMAVSDLLILLGLPFD). Over 95–112 (LYRLWRSRPWVFGPLLCR) the chain is Extracellular. Cys-111 and Cys-235 form a disulfide bridge. The helical transmembrane segment at 113 to 134 (LSLYVGEGCTYATLLHMTALSV) threads the bilayer. The Cytoplasmic portion of the chain corresponds to 135 to 157 (ERYLAICRPLRARVLVTRRRVRA). Residues 158 to 178 (LIAVLWAVALLSAGPFLFLVG) form a helical membrane-spanning segment. Residues 179–246 (VEQDPGISVV…PSPAQLGALR (68 aa)) are Extracellular-facing. N-linked (GlcNAc...) asparagine glycosylation is present at Asn-192. The chain crosses the membrane as a helical span at residues 247–270 (VMLWVTTAYFFLPFLCLSILYGLI). Over 271–298 (GRELWSSRRPLRGPAASGRERGHRQTVR) the chain is Cytoplasmic. A helical transmembrane segment spans residues 299–320 (VLLVVVLAFIICWLPFHVGRII). Topologically, residues 321 to 334 (YINTEDSRMMYFSQ) are extracellular. The helical transmembrane segment at 335 to 358 (YFNIVALQLFYLSASINPILYNLI) threads the bilayer. Residues 359 to 412 (SKKYRAAAFKLLLARKSRPRGFHRSRDTAGEVAGDTGGDTVGYTETSANVKTMG) are Cytoplasmic-facing.

Belongs to the G-protein coupled receptor 1 family. In terms of tissue distribution, expressed only in thyroid, stomach, and bone marrow.

The protein localises to the cell membrane. In terms of biological role, receptor for motilin. This Homo sapiens (Human) protein is Motilin receptor (MLNR).